A 581-amino-acid chain; its full sequence is Glutamyl-tRNA reductase (581 aa).

Substrate-binding positions include 49–52 (TCNR), S109, 114–116 (EGQ), and Q120. Residue C50 is the Nucleophile of the active site. 192-197 (GAGSMS) is an NADP(+) binding site. The insert stretch occupies residues 292–416 (PAVEDTAVQE…AEAPRPQPVL (125 aa)).

It belongs to the glutamyl-tRNA reductase family. Homodimer.

The enzyme catalyses (S)-4-amino-5-oxopentanoate + tRNA(Glu) + NADP(+) = L-glutamyl-tRNA(Glu) + NADPH + H(+). It functions in the pathway porphyrin-containing compound metabolism; protoporphyrin-IX biosynthesis; 5-aminolevulinate from L-glutamyl-tRNA(Glu): step 1/2. Functionally, catalyzes the NADPH-dependent reduction of glutamyl-tRNA(Glu) to glutamate 1-semialdehyde (GSA). In Streptomyces coelicolor (strain ATCC BAA-471 / A3(2) / M145), this protein is Glutamyl-tRNA reductase.